The chain runs to 63 residues: Large ribosomal subunit protein bL32 (63 aa).

The interval 1-27 is disordered; that stretch reads MANPKAKMSKSRRDKRRAQFNARTKPV. Basic residues predominate over residues 7–18; that stretch reads KMSKSRRDKRRA.

Belongs to the bacterial ribosomal protein bL32 family.

The chain is Large ribosomal subunit protein bL32 from Chlorobium phaeobacteroides (strain DSM 266 / SMG 266 / 2430).